The primary structure comprises 365 residues: Chorismate synthase (365 aa).

Positions 48 and 54 each coordinate NADP(+). FMN is bound by residues 125–127 (RSS), 237–238 (NA), glycine 277, 292–296 (KPTSS), and arginine 318.

This sequence belongs to the chorismate synthase family. In terms of assembly, homotetramer. The cofactor is FMNH2.

The enzyme catalyses 5-O-(1-carboxyvinyl)-3-phosphoshikimate = chorismate + phosphate. Its pathway is metabolic intermediate biosynthesis; chorismate biosynthesis; chorismate from D-erythrose 4-phosphate and phosphoenolpyruvate: step 7/7. In terms of biological role, catalyzes the anti-1,4-elimination of the C-3 phosphate and the C-6 proR hydrogen from 5-enolpyruvylshikimate-3-phosphate (EPSP) to yield chorismate, which is the branch point compound that serves as the starting substrate for the three terminal pathways of aromatic amino acid biosynthesis. This reaction introduces a second double bond into the aromatic ring system. This Verminephrobacter eiseniae (strain EF01-2) protein is Chorismate synthase.